The chain runs to 427 residues: Trigger factor (427 aa).

In terms of domain architecture, PPIase FKBP-type spans 163-248 (GDTVVIDFVG…IHEVKAKEVP (86 aa)).

It belongs to the FKBP-type PPIase family. Tig subfamily.

It localises to the cytoplasm. The catalysed reaction is [protein]-peptidylproline (omega=180) = [protein]-peptidylproline (omega=0). Its function is as follows. Involved in protein export. Acts as a chaperone by maintaining the newly synthesized protein in an open conformation. Functions as a peptidyl-prolyl cis-trans isomerase. The chain is Trigger factor from Streptococcus pneumoniae (strain 70585).